We begin with the raw amino-acid sequence, 309 residues long: Oxidoreductase NAD-binding domain-containing protein 1 (309 aa).

The first 14 residues, 1 to 14 (MVVVIPRLLRGSLG), serve as a signal peptide directing secretion. The 115-residue stretch at 47-161 (HLERTADVVR…VGGEFFFDPK (115 aa)) folds into the FAD-binding FR-type domain. 175-180 (GVGINP) provides a ligand contact to NAD(+).

This is Oxidoreductase NAD-binding domain-containing protein 1 (OXNAD1) from Bos taurus (Bovine).